Reading from the N-terminus, the 236-residue chain is Leucyl/phenylalanyl-tRNA--protein transferase (236 aa).

It belongs to the L/F-transferase family.

The protein resides in the cytoplasm. It catalyses the reaction N-terminal L-lysyl-[protein] + L-leucyl-tRNA(Leu) = N-terminal L-leucyl-L-lysyl-[protein] + tRNA(Leu) + H(+). The enzyme catalyses N-terminal L-arginyl-[protein] + L-leucyl-tRNA(Leu) = N-terminal L-leucyl-L-arginyl-[protein] + tRNA(Leu) + H(+). It carries out the reaction L-phenylalanyl-tRNA(Phe) + an N-terminal L-alpha-aminoacyl-[protein] = an N-terminal L-phenylalanyl-L-alpha-aminoacyl-[protein] + tRNA(Phe). Its function is as follows. Functions in the N-end rule pathway of protein degradation where it conjugates Leu, Phe and, less efficiently, Met from aminoacyl-tRNAs to the N-termini of proteins containing an N-terminal arginine or lysine. This Shewanella sp. (strain MR-7) protein is Leucyl/phenylalanyl-tRNA--protein transferase.